We begin with the raw amino-acid sequence, 557 residues long: Dihydroxy-acid dehydratase (557 aa).

C47 provides a ligand contact to [2Fe-2S] cluster. A Mg(2+)-binding site is contributed by D79. C120 contributes to the [2Fe-2S] cluster binding site. Mg(2+) contacts are provided by D121 and K122. K122 bears the N6-carboxylysine mark. Residue C192 participates in [2Fe-2S] cluster binding. Mg(2+) is bound at residue E444. The Proton acceptor role is filled by S470.

This sequence belongs to the IlvD/Edd family. As to quaternary structure, homodimer. Requires [2Fe-2S] cluster as cofactor. Mg(2+) serves as cofactor.

It catalyses the reaction (2R)-2,3-dihydroxy-3-methylbutanoate = 3-methyl-2-oxobutanoate + H2O. It carries out the reaction (2R,3R)-2,3-dihydroxy-3-methylpentanoate = (S)-3-methyl-2-oxopentanoate + H2O. It functions in the pathway amino-acid biosynthesis; L-isoleucine biosynthesis; L-isoleucine from 2-oxobutanoate: step 3/4. The protein operates within amino-acid biosynthesis; L-valine biosynthesis; L-valine from pyruvate: step 3/4. Its function is as follows. Functions in the biosynthesis of branched-chain amino acids. Catalyzes the dehydration of (2R,3R)-2,3-dihydroxy-3-methylpentanoate (2,3-dihydroxy-3-methylvalerate) into 2-oxo-3-methylpentanoate (2-oxo-3-methylvalerate) and of (2R)-2,3-dihydroxy-3-methylbutanoate (2,3-dihydroxyisovalerate) into 2-oxo-3-methylbutanoate (2-oxoisovalerate), the penultimate precursor to L-isoleucine and L-valine, respectively. This Synechococcus sp. (strain CC9605) protein is Dihydroxy-acid dehydratase.